The primary structure comprises 394 residues: Probable tRNA sulfurtransferase (394 aa).

One can recognise a THUMP domain in the interval aspartate 61 to isoleucine 168. ATP-binding positions include leucine 185–leucine 186, tyrosine 210–phenylalanine 211, arginine 267, glycine 289, and glutamine 298.

It belongs to the ThiI family.

It localises to the cytoplasm. The enzyme catalyses [ThiI sulfur-carrier protein]-S-sulfanyl-L-cysteine + a uridine in tRNA + 2 reduced [2Fe-2S]-[ferredoxin] + ATP + H(+) = [ThiI sulfur-carrier protein]-L-cysteine + a 4-thiouridine in tRNA + 2 oxidized [2Fe-2S]-[ferredoxin] + AMP + diphosphate. The catalysed reaction is [ThiS sulfur-carrier protein]-C-terminal Gly-Gly-AMP + S-sulfanyl-L-cysteinyl-[cysteine desulfurase] + AH2 = [ThiS sulfur-carrier protein]-C-terminal-Gly-aminoethanethioate + L-cysteinyl-[cysteine desulfurase] + A + AMP + 2 H(+). It participates in cofactor biosynthesis; thiamine diphosphate biosynthesis. Catalyzes the ATP-dependent transfer of a sulfur to tRNA to produce 4-thiouridine in position 8 of tRNAs, which functions as a near-UV photosensor. Also catalyzes the transfer of sulfur to the sulfur carrier protein ThiS, forming ThiS-thiocarboxylate. This is a step in the synthesis of thiazole, in the thiamine biosynthesis pathway. The sulfur is donated as persulfide by IscS. In Agathobacter rectalis (strain ATCC 33656 / DSM 3377 / JCM 17463 / KCTC 5835 / VPI 0990) (Eubacterium rectale), this protein is Probable tRNA sulfurtransferase.